Here is a 347-residue protein sequence, read N- to C-terminus: NADH-ubiquinone oxidoreductase chain 2 (347 aa).

The next 11 helical transmembrane spans lie at 3 to 23 (PPIF…VMTS), 25 to 45 (HWML…PILM), 59 to 79 (YFLT…INLL), 96 to 116 (ILMT…FWVP), 122 to 142 (IPLS…LSVL), 149 to 169 (INPN…GWGG), 178 to 198 (ILAY…LYNP), 201 to 221 (MILN…LFML), 237 to 257 (MPLI…LPPL), 274 to 294 (EMII…YFYM), and 325 to 345 (FLPP…MISI).

It belongs to the complex I subunit 2 family. In terms of assembly, core subunit of respiratory chain NADH dehydrogenase (Complex I) which is composed of 45 different subunits. Interacts with TMEM242.

It is found in the mitochondrion inner membrane. The catalysed reaction is a ubiquinone + NADH + 5 H(+)(in) = a ubiquinol + NAD(+) + 4 H(+)(out). Its function is as follows. Core subunit of the mitochondrial membrane respiratory chain NADH dehydrogenase (Complex I) which catalyzes electron transfer from NADH through the respiratory chain, using ubiquinone as an electron acceptor. Essential for the catalytic activity and assembly of complex I. This chain is NADH-ubiquinone oxidoreductase chain 2, found in Genetta servalina (Servaline genet).